Here is a 534-residue protein sequence, read N- to C-terminus: High affinity cGMP-specific 3',5'-cyclic phosphodiesterase 9A (534 aa).

A PDEase domain is found at 175–496 (PRRDVPTYPK…EHYEELKQLD (322 aa)). The active-site Proton donor is H251. 251–255 (HNFRH) is a binding site for 3',5'-cyclic GMP. Residues H255, H291, and D292 each coordinate Zn(2+). D292 is a binding site for 3',5'-cyclic GMP. Mg(2+) is bound at residue D292. S318 is subject to Phosphoserine. 3',5'-cyclic GMP-binding positions include D401, Y423, and 451–452 (AQ). Residue D401 participates in Zn(2+) binding. A disordered region spans residues 500–534 (KELQKKTESLTSGAPENTTEKNRDAKDSEGHSPPN). A compositionally biased stretch (basic and acidic residues) spans 517–534 (TTEKNRDAKDSEGHSPPN).

This sequence belongs to the cyclic nucleotide phosphodiesterase family. PDE9 subfamily. In terms of assembly, homodimer. Zn(2+) serves as cofactor. The cofactor is Mg(2+). As to expression, highly expressed in kidney. Lower levels in liver, lung and brain. Widely expressed in brain, with highest expression in cerebellar Purkinje cells. Present in heart (at protein level).

It is found in the cell projection. It localises to the ruffle membrane. Its subcellular location is the cytoplasm. The protein localises to the perinuclear region. The protein resides in the golgi apparatus. It is found in the endoplasmic reticulum. It localises to the cell membrane. Its subcellular location is the sarcolemma. The catalysed reaction is 3',5'-cyclic GMP + H2O = GMP + H(+). It functions in the pathway purine metabolism; 3',5'-cyclic GMP degradation; GMP from 3',5'-cyclic GMP: step 1/1. With respect to regulation, inhibited by SCH 51866 and moderately, by zaprinast. Specifically inhibited by PF-04447943 (6-[(3S,4S)-4-methyl-1-(pyrimidin-2-ylmethyl)pyrrolidin-3-yl]-1-(tetrahydro-2H-pyran-4-yl)-1,5-dihydro-4H-pyrazolo[3,4-d]pyrimidin-4-one). In terms of biological role, specifically hydrolyzes the second messenger cGMP, which is a key regulator of many important physiological processes. Highly specific: compared to other members of the cyclic nucleotide phosphodiesterase family, has the highest affinity and selectivity for cGMP. Specifically regulates natriuretic-peptide-dependent cGMP signaling in heart, acting as a regulator of cardiac hypertrophy in myocytes and muscle. Does not regulate nitric oxide-dependent cGMP in heart. Additional experiments are required to confirm whether its ability to hydrolyze natriuretic-peptide-dependent cGMP is specific to heart or is a general feature of the protein. In brain, involved in cognitive function, such as learning and long-term memory. The polypeptide is High affinity cGMP-specific 3',5'-cyclic phosphodiesterase 9A (Pde9a) (Mus musculus (Mouse)).